Here is a 206-residue protein sequence, read N- to C-terminus: Probable N-acetyltransferase 14 (206 aa).

The N-acetyltransferase domain maps to 55-206 (LRFVLASFAL…TLVREFSKDL (152 aa)). The helical transmembrane segment at 57 to 77 (FVLASFALALLLPVFLAVTAV) threads the bilayer.

The protein belongs to the camello family.

It localises to the membrane. In terms of biological role, probable acetyltransferase. May act as a transcription factor regulating the expression of coproporphyrinogen oxidase by binding to a promoter regulatory element. In Macaca fascicularis (Crab-eating macaque), this protein is Probable N-acetyltransferase 14 (NAT14).